A 437-amino-acid chain; its full sequence is Kynureninase (437 aa).

Pyridoxal 5'-phosphate-binding positions include leucine 99, threonine 100, 127–130 (FPSD), serine 183, aspartate 212, histidine 215, and tyrosine 237. Lysine 238 is subject to N6-(pyridoxal phosphate)lysine. Residues tryptophan 267 and asparagine 295 each contribute to the pyridoxal 5'-phosphate site.

This sequence belongs to the kynureninase family. In terms of assembly, homodimer. The cofactor is pyridoxal 5'-phosphate.

The protein localises to the cytoplasm. It catalyses the reaction L-kynurenine + H2O = anthranilate + L-alanine + H(+). The catalysed reaction is 3-hydroxy-L-kynurenine + H2O = 3-hydroxyanthranilate + L-alanine + H(+). It functions in the pathway amino-acid degradation; L-kynurenine degradation; L-alanine and anthranilate from L-kynurenine: step 1/1. It participates in cofactor biosynthesis; NAD(+) biosynthesis; quinolinate from L-kynurenine: step 2/3. Its function is as follows. Catalyzes the cleavage of L-kynurenine (L-Kyn) and L-3-hydroxykynurenine (L-3OHKyn) into anthranilic acid (AA) and 3-hydroxyanthranilic acid (3-OHAA), respectively. This is Kynureninase from Yarrowia lipolytica (strain CLIB 122 / E 150) (Yeast).